The primary structure comprises 224 residues: 7-cyano-7-deazaguanine synthase (224 aa).

An ATP-binding site is contributed by 10 to 20 (FSGGQDSTTCL). The Zn(2+) site is built by Cys-193, Cys-201, Cys-204, and Cys-207.

Belongs to the QueC family. The cofactor is Zn(2+).

The enzyme catalyses 7-carboxy-7-deazaguanine + NH4(+) + ATP = 7-cyano-7-deazaguanine + ADP + phosphate + H2O + H(+). Its pathway is purine metabolism; 7-cyano-7-deazaguanine biosynthesis. Functionally, catalyzes the ATP-dependent conversion of 7-carboxy-7-deazaguanine (CDG) to 7-cyano-7-deazaguanine (preQ(0)). This Neisseria gonorrhoeae (strain ATCC 700825 / FA 1090) protein is 7-cyano-7-deazaguanine synthase.